The chain runs to 105 residues: Nitrogen fixation nifHD region glnB-like protein 1 (105 aa).

This sequence belongs to the P(II) protein family.

Could be involved in the regulation of nitrogen fixation. This Methanococcus maripaludis (strain DSM 14266 / JCM 13030 / NBRC 101832 / S2 / LL) protein is Nitrogen fixation nifHD region glnB-like protein 1 (glnBI).